The primary structure comprises 3391 residues: Genome polyprotein (3391 aa).

Positions 1–15 are interaction with host EXOC1; that stretch reads MNNQRKKARNTPFNM. The Cytoplasmic portion of the chain corresponds to 1 to 101; sequence MNNQRKKARN…LNILNRRRRT (101 aa). The segment at 37–72 is hydrophobic; homodimerization of capsid protein C; the sequence is MLQGRGPLKLFMALVAFLRFLTIPPTAGILKRWGTI. Positions 101–114 are cleaved as a propeptide — ER anchor for the capsid protein C, removed in mature form by serine protease NS3; sequence TAGMIIMLIPTVMA. The helical transmembrane segment at 102-122 threads the bilayer; sequence AGMIIMLIPTVMAFHLTTRNG. The Extracellular segment spans residues 123-238; the sequence is EPHMIVSRQE…GAWKHAQRIE (116 aa). N-linked (GlcNAc...) asparagine; by host glycosylation is present at N183. A helical transmembrane segment spans residues 239–259; that stretch reads TWILRHPGFTIMAAILAYTIG. The Cytoplasmic portion of the chain corresponds to 260–265; the sequence is TTHFQR. The chain crosses the membrane as a helical span at residues 266–280; that stretch reads ALIFILLTAVAPSMT. Residues 281 to 725 lie on the Extracellular side of the membrane; sequence MRCIGISNRD…LHQVFGAIYG (445 aa). Cystine bridges form between C283/C310, C340/C401, C354/C385, and C372/C396. The N-linked (GlcNAc...) asparagine; by host glycan is linked to N347. Residues 378-391 form a fusion peptide region; it reads DRGWGNGCGLFGKG. N433 carries N-linked (GlcNAc...) asparagine; by host glycosylation. Cystine bridges form between C465–C565 and C582–C613. The helical transmembrane segment at 726 to 746 threads the bilayer; sequence AAFSGVSWIMKILIGVIITWI. Residues 747 to 752 lie on the Cytoplasmic side of the membrane; sequence GMNSRS. The chain crosses the membrane as a helical span at residues 753-773; it reads TSLSVSLVLVGVVTLYLGVMV. Residues 774–1195 are Extracellular-facing; it reads QADSGCVVSW…MVGATMTDDI (422 aa). 6 cysteine pairs are disulfide-bonded: C779–C790, C830–C918, C954–C998, C1055–C1104, C1066–C1088, and C1087–C1091. Residues N905 and N982 are each glycosylated (N-linked (GlcNAc...) asparagine; by host). Residues 1196–1220 traverse the membrane as a helical segment; it reads GMGVTYLALLAAFKVRPTFAAGLLL. Over 1221–1226 the chain is Cytoplasmic; that stretch reads RKLTSK. Residues 1227–1245 traverse the membrane as a helical segment; it reads ELMMTTIGIVLLSQSTIPE. Residues 1246 to 1269 are Lumenal-facing; it reads TILELTDALALGMMVLKMVRKMEK. Residues 1270–1290 form a helical membrane-spanning segment; the sequence is YQLAVTIMAILCVPNAVILQN. Residue A1291 is a topological domain, cytoplasmic. A helical membrane pass occupies residues 1292–1310; sequence WKVSCTILAVVSVSPLFLT. The Lumenal portion of the chain corresponds to 1311 to 1317; it reads SSQQKAD. Residues 1318 to 1338 form a helical membrane-spanning segment; that stretch reads WIPLALTIKGLNPTAIFLTTL. Topologically, residues 1339–1346 are cytoplasmic; it reads SRTNKKRS. The chain crosses the membrane as a helical span at residues 1347 to 1367; that stretch reads WPLNEAIMAVGMVSILASSLL. Residues 1368–1370 are Lumenal-facing; that stretch reads KND. The helical transmembrane segment at 1371–1391 threads the bilayer; it reads IPMTGPLVAGGLLTVCYVLTG. At 1392–1447 the chain is on the cytoplasmic side; that stretch reads RSADLELERAADVKWEDQAEISGSSPILSITISEDGSMSIKNEEEEQTLTILIRTG. Positions 1398–1437 are interacts with and activates NS3 protease; that stretch reads LERAADVKWEDQAEISGSSPILSITISEDGSMSIKNEEEE. Positions 1448–1468 form an intramembrane region, helical; sequence LLVISGLFPVSIPITAAAWYL. The Cytoplasmic portion of the chain corresponds to 1469-2147; it reads WEVKKQRAGV…LSELPETLET (679 aa). One can recognise a Peptidase S7 domain in the interval 1476-1653; the sequence is AGVLWDVPSP…EKSIEDNPEI (178 aa). Active-site charge relay system; for serine protease NS3 activity residues include H1526, D1550, and S1610. The Helicase ATP-binding domain occupies 1655-1811; that stretch reads DDIFRKRKLT…QSNAPIMDEE (157 aa). Residues 1659-1662 are important for RNA-binding; that stretch reads RKRK. 1668–1675 is a binding site for ATP; sequence LHPGAGKT. Positions 1759-1762 match the DEAH box motif; that stretch reads DEAH. Positions 1821 to 1988 constitute a Helicase C-terminal domain; it reads SGHEWVTDFK…IIPSMFEPER (168 aa). K1863 is subject to N6-acetyllysine; by host. A helical transmembrane segment spans residues 2148-2168; that stretch reads LLLLTLLATVTGGIFLFLMSG. The Lumenal portion of the chain corresponds to 2169 to 2170; sequence RG. The helical intramembrane region spans 2171–2191; it reads IGKMTLGMCCIITASILLWYA. Q2192 is a topological domain (lumenal). The chain crosses the membrane as a helical span at residues 2193 to 2213; that stretch reads IQPHWIAASIILEFFLIVLLI. The Cytoplasmic segment spans residues 2214–2228; that stretch reads PEPEKQRTPQDNQLT. The helical transmembrane segment at 2229–2249 threads the bilayer; that stretch reads YVVIAILTVVAATMANEMGFL. The Lumenal portion of the chain corresponds to 2250–2274; the sequence is EKTKKDLGLGSITTQQPESNILDID. An intramembrane region (helical) is located at residues 2275-2295; sequence LRPASAWTLYAVATTFVTPML. The Lumenal segment spans residues 2296–2316; sequence RHSIENSSVNVSLTAIANQAT. N2301 and N2305 each carry an N-linked (GlcNAc...) asparagine; by host glycan. Positions 2317-2337 form an intramembrane region, helical; it reads VLMGLGKGWPLSKMDIGVPLL. The Lumenal segment spans residues 2338–2347; the sequence is AIGCYSQVNP. A helical membrane pass occupies residues 2348–2368; sequence ITLTAALFLLVAHYAIIGPGL. Topologically, residues 2369-2413 are cytoplasmic; that stretch reads QAKATREAQKRAAAGIMKNPTVDGITVIDLDPIPYDPKFEKQLGQ. Residues 2414–2434 traverse the membrane as a helical segment; it reads VMLLVLCVTQVLMMRTTWALC. Residues 2435–2459 lie on the Lumenal side of the membrane; the sequence is EALTLATGPISTLWEGNPGRFWNTT. A glycan (N-linked (GlcNAc...) asparagine; by host) is linked at N2457. Residues 2460 to 2480 traverse the membrane as a helical segment; it reads IAVSMANIFRGSYLAGAGLLF. The Cytoplasmic segment spans residues 2481–3391; the sequence is SIMKNTTNTR…KEEEEAGVLW (911 aa). The mRNA cap 0-1 NS5-type MT domain occupies 2493 to 2755; that stretch reads TGNIGETLGE…DVDLGSGTRN (263 aa). S2547 is a binding site for S-adenosyl-L-methionine. S2547 is modified (phosphoserine). K2552 serves as the catalytic For 2'-O-MTase activity. The SUMO-interacting motif motif lies at 2568 to 2571; it reads VVDL. Positions 2577, 2578, 2595, 2596, 2622, and 2623 each coordinate S-adenosyl-L-methionine. D2637 (for 2'-O-MTase activity) is an active-site residue. Residue I2638 participates in S-adenosyl-L-methionine binding. Catalysis depends on for 2'-O-MTase activity residues K2672 and E2708. Y2710 is a binding site for S-adenosyl-L-methionine. Residues E2929, H2933, C2938, and C2941 each coordinate Zn(2+). Residues 3019 to 3168 enclose the RdRp catalytic domain; sequence GAMYADDTAG…KPLDDRFASA (150 aa). Zn(2+) is bound by residues H3203, C3219, and C3338.

In the N-terminal section; belongs to the class I-like SAM-binding methyltransferase superfamily. mRNA cap 0-1 NS5-type methyltransferase family. As to quaternary structure, homodimer. Interacts (via N-terminus) with host EXOC1 (via C-terminus); this interaction results in EXOC1 degradation through the proteasome degradation pathway. Forms heterodimers with envelope protein E in the endoplasmic reticulum and Golgi. In terms of assembly, homodimer; in the endoplasmic reticulum and Golgi. Interacts with protein prM. Interacts with non-structural protein 1. As to quaternary structure, homodimer; Homohexamer when secreted. Interacts with envelope protein E. Interacts with host PRKAA1. Interacts (via N-terminus) with serine protease NS3. In terms of assembly, forms a heterodimer with serine protease NS3. May form homooligomers. As to quaternary structure, forms a heterodimer with NS2B. Interacts with NS4B. Interacts with unphosphorylated RNA-directed RNA polymerase NS5; this interaction stimulates RNA-directed RNA polymerase NS5 guanylyltransferase activity. Interacts with host SHFL. Interacts with host MAVS; this interaction inhibits the synthesis of IFN-beta. Interacts with host MAVS; this interaction inhibits the synthesis of IFN-beta. Interacts with host SHFL. Interacts with host AUP1; the interaction occurs in the presence of Dengue virus NS4B and induces lipophagy which facilitates production of virus progeny particles. May interact with host SRPRA and SEC61G. In terms of assembly, interacts with serine protease NS. As to quaternary structure, homodimer. Interacts with host STAT2; this interaction inhibits the phosphorylation of the latter, and, when all viral proteins are present (polyprotein), targets STAT2 for degradation. Interacts with serine protease NS3. Interacts with host PAF1 complex; the interaction may prevent the recruitment of the PAF1 complex to interferon-responsive genes, and thus reduces the immune response. Specific enzymatic cleavages in vivo yield mature proteins. Cleavages in the lumen of endoplasmic reticulum are performed by host signal peptidase, whereas cleavages in the cytoplasmic side are performed by serine protease NS3. Signal cleavage at the 2K-4B site requires a prior NS3 protease-mediated cleavage at the 4A-2K site. In terms of processing, cleaved in post-Golgi vesicles by a host furin, releasing the mature small envelope protein M, and peptide pr. This cleavage is incomplete as up to 30% of viral particles still carry uncleaved prM. Post-translationally, N-glycosylated. N-glycosylated. The excreted form is glycosylated and this is required for efficient secretion of the protein from infected cells. In terms of processing, acetylated by host KAT5. Acetylation modulates NS3 RNA-binding and unwinding activities and plays an important positive role for viral replication. Post-translationally, sumoylation of RNA-directed RNA polymerase NS5 increases NS5 protein stability allowing proper viral RNA replication. Phosphorylated on serines residues. This phosphorylation may trigger NS5 nuclear localization.

Its subcellular location is the virion. It localises to the host nucleus. The protein localises to the host cytoplasm. It is found in the host perinuclear region. The protein resides in the secreted. Its subcellular location is the virion membrane. It localises to the host endoplasmic reticulum membrane. The protein localises to the host mitochondrion. The enzyme catalyses Selective hydrolysis of -Xaa-Xaa-|-Yaa- bonds in which each of the Xaa can be either Arg or Lys and Yaa can be either Ser or Ala.. It catalyses the reaction RNA(n) + a ribonucleoside 5'-triphosphate = RNA(n+1) + diphosphate. It carries out the reaction a ribonucleoside 5'-triphosphate + H2O = a ribonucleoside 5'-diphosphate + phosphate + H(+). The catalysed reaction is ATP + H2O = ADP + phosphate + H(+). The enzyme catalyses a 5'-end (5'-triphosphoguanosine)-ribonucleoside in mRNA + S-adenosyl-L-methionine = a 5'-end (N(7)-methyl 5'-triphosphoguanosine)-ribonucleoside in mRNA + S-adenosyl-L-homocysteine. It catalyses the reaction a 5'-end (N(7)-methyl 5'-triphosphoguanosine)-ribonucleoside in mRNA + S-adenosyl-L-methionine = a 5'-end (N(7)-methyl 5'-triphosphoguanosine)-(2'-O-methyl-ribonucleoside) in mRNA + S-adenosyl-L-homocysteine + H(+). Functionally, plays a role in virus budding by binding to the cell membrane and gathering the viral RNA into a nucleocapsid that forms the core of a mature virus particle. During virus entry, may induce genome penetration into the host cytoplasm after hemifusion induced by the surface proteins. Can migrate to the cell nucleus where it modulates host functions. Overcomes the anti-viral effects of host EXOC1 by sequestering and degrading the latter through the proteasome degradation pathway. Inhibits RNA silencing by interfering with host Dicer. In terms of biological role, prevents premature fusion activity of envelope proteins in trans-Golgi by binding to envelope protein E at pH6.0. After virion release in extracellular space, gets dissociated from E dimers. Its function is as follows. Acts as a chaperone for envelope protein E during intracellular virion assembly by masking and inactivating envelope protein E fusion peptide. prM is the only viral peptide matured by host furin in the trans-Golgi network probably to avoid catastrophic activation of the viral fusion activity in acidic Golgi compartment prior to virion release. prM-E cleavage is inefficient, and many virions are only partially matured. These uncleaved prM would play a role in immune evasion. Functionally, may play a role in virus budding. Exerts cytotoxic effects by activating a mitochondrial apoptotic pathway through M ectodomain. May display a viroporin activity. Binds to host cell surface receptor and mediates fusion between viral and cellular membranes. Envelope protein is synthesized in the endoplasmic reticulum in the form of heterodimer with protein prM. They play a role in virion budding in the ER, and the newly formed immature particle is covered with 60 spikes composed of heterodimer between precursor prM and envelope protein E. The virion is transported to the Golgi apparatus where the low pH causes dissociation of PrM-E heterodimers and formation of E homodimers. prM-E cleavage is inefficient, and many virions are only partially matured. These uncleaved prM would play a role in immune evasion. In terms of biological role, involved in immune evasion, pathogenesis and viral replication. Once cleaved off the polyprotein, is targeted to three destinations: the viral replication cycle, the plasma membrane and the extracellular compartment. Essential for viral replication. Required for formation of the replication complex and recruitment of other non-structural proteins to the ER-derived membrane structures. Excreted as a hexameric lipoparticle that plays a role against host immune response. Antagonizing the complement function. Binds to the host macrophages and dendritic cells. Inhibits signal transduction originating from Toll-like receptor 3 (TLR3). Mediates complement activation, which may contribute to the pathogenesis of the vascular leakage that occurs in severe dengue disease. Activates autophagy through the AMPK/ERK/mTOR signaling pathway. Mechanistically, acts as the assembly platform for STK11-AMPK interactions and promotes STK11-AMPK interactions. In turn, promotes phosphorylation of the AMPK kinase structural domain and activates AMPK, thereby positively regulating the AMPK/ERK/mTOR signaling pathway and inducing autophagy. Its function is as follows. Disrupts the host endothelial glycocalyx layer of host pulmonary microvascular endothelial cells, inducing degradation of sialic acid and shedding of heparan sulfate proteoglycans. NS1 induces expression of sialidases, heparanase, and activates cathepsin L, which activates heparanase via enzymatic cleavage. These effects are probably linked to the endothelial hyperpermeability observed in severe dengue disease. Functionally, component of the viral RNA replication complex that functions in virion assembly and antagonizes the host immune response. Required cofactor for the serine protease function of NS3. May have membrane-destabilizing activity and form viroporins. In terms of biological role, displays three enzymatic activities: serine protease, NTPase and RNA helicase. NS3 serine protease, in association with NS2B, performs its autocleavage and cleaves the polyprotein at dibasic sites in the cytoplasm: C-prM, NS2A-NS2B, NS2B-NS3, NS3-NS4A, NS4A-2K and NS4B-NS5. NS3 RNA helicase binds RNA and unwinds dsRNA in the 3' to 5' direction. Its function is as follows. Regulates the ATPase activity of the NS3 helicase activity. NS4A allows NS3 helicase to conserve energy during unwinding. Plays a role in the inhibition of the host innate immune response. Interacts with host MAVS and thereby prevents the interaction between RIGI and MAVS. In turn, IFN-beta production is impaired. Interacts with host AUP1 which mediates induction of lipophagy in host cells and facilitates production of virus progeny particles. Functionally, functions as a signal peptide for NS4B and is required for the interferon antagonism activity of the latter. Induces the formation of ER-derived membrane vesicles where the viral replication takes place. Inhibits interferon (IFN)-induced host STAT1 phosphorylation and nuclear translocation, thereby preventing the establishment of cellular antiviral state by blocking the IFN-alpha/beta pathway. In terms of biological role, replicates the viral (+) and (-) RNA genome, and performs the capping of genomes in the cytoplasm. NS5 methylates viral RNA cap at guanine N-7 and ribose 2'-O positions. Besides its role in RNA genome replication, also prevents the establishment of cellular antiviral state by blocking the interferon-alpha/beta (IFN-alpha/beta) signaling pathway. Inhibits host TYK2 and STAT2 phosphorylation, thereby preventing activation of JAK-STAT signaling pathway. May reduce immune responses by preventing the recruitment of the host PAF1 complex to interferon-responsive genes. The polypeptide is Genome polyprotein (Aedimorphus (Red guenon)).